Here is a 1325-residue protein sequence, read N- to C-terminus: Protein suppressor of sable (1325 aa).

2 disordered regions span residues 1–36 (MSVA…SKIQ) and 74–326 (VCLQ…GGSN). Residues 9 to 30 (PLIDLEEDLEDGEIDDDEEDEQ) show a composition bias toward acidic residues. Over residues 119–131 (RSSNQDTSDQSLE) the composition is skewed to polar residues. Residues 138 to 327 (ATANPLLQST…GQEKMGGSNR (190 aa)) form a highly charged region. The span at 149–158 (SSRRRKRKKE) shows a compositional bias: basic residues. Positions 149 to 179 (SSRRRKRKKEREREQKKDKEQQNRSRRDEND) form a coiled coil. The segment covering 159 to 178 (REREQKKDKEQQNRSRRDEN) has biased composition (basic and acidic residues). Residues 236-246 (AGLGAGGGGGY) are compositionally biased toward gly residues. The stretch at 276 to 296 (NEKEHQRGVNNRKRRDRDRLE) forms a coiled coil. 2 C3H1-type zinc fingers span residues 330-357 (PRKL…HKEF) and 358-381 (PCKY…HGEP). A coiled-coil region spans residues 444–478 (KRQDHQMQQQQQQLQHQQLQQQQEQQQTQQQAAAD). The span at 499 to 509 (KRKSRWTEKMG) shows a compositional bias: basic and acidic residues. Disordered regions lie at residues 499–535 (KRKS…LPPH), 588–622 (KAED…KSNG), 639–695 (FSGN…PSVF), 710–745 (SARQ…IGGG), 780–835 (AHSG…ALPP), 979–1058 (DLET…GGSK), 1143–1170 (EPNG…GGGV), and 1295–1325 (RGGH…NRNI). Residue Ser-524 is modified to Phosphoserine. The span at 594 to 606 (PQTQAELESSTPP) shows a compositional bias: polar residues. At Thr-604 the chain carries Phosphothreonine. Positions 644 to 668 (PLDDDRDDDEQLIIDDGNDSTAEED) are enriched in acidic residues. Ser-663 carries the phosphoserine modification. The residue at position 664 (Thr-664) is a Phosphothreonine. A compositionally biased stretch (polar residues) spans 710–726 (SARQLLPASATSPNQEN). Residues 790 to 800 (SNENSNSNSHS) are compositionally biased toward low complexity. Positions 1003 to 1015 (SVPPPSMRVPPPN) are enriched in pro residues. A compositionally biased stretch (basic and acidic residues) spans 1021–1033 (PTVRTDPRRDPRR). Over residues 1042 to 1056 (GASTANTTAPNASGG) the composition is skewed to low complexity. Composition is skewed to gly residues over residues 1149 to 1170 (AALG…GGGV) and 1295 to 1309 (RGGH…GNGN).

This sequence belongs to the suppressor of sable family. As to quaternary structure, interacts with Wdr82.

The protein resides in the nucleus. It is found in the chromosome. Functionally, RNA-binding protein that suppresses transcription of some RNAs. Together with Wdr82, part of a transcription termination checkpoint that promotes transcription termination of RNAs and their subsequent degradation by the nuclear exosome. Promotes transcription termination of aberrant RNAs, transcripts from genes containing a transposon inserted at their very 5' end or RNAs from heat-shock-inducible repetitive element. Binds RNA preferentially at a sequence that resembles a cryptic 5'-splice site. The chain is Protein suppressor of sable from Drosophila melanogaster (Fruit fly).